The chain runs to 134 residues: Small ribosomal subunit protein uS8c (134 aa).

This sequence belongs to the universal ribosomal protein uS8 family. Part of the 30S ribosomal subunit.

It localises to the plastid. Functionally, one of the primary rRNA binding proteins, it binds directly to 16S rRNA central domain where it helps coordinate assembly of the platform of the 30S subunit. The protein is Small ribosomal subunit protein uS8c (rps8) of Cuscuta gronovii (Common dodder).